The following is a 210-amino-acid chain: Pyridoxine/pyridoxamine 5'-phosphate oxidase (210 aa).

Residues 7–10 (REDY) and K65 contribute to the substrate site. Residues 60-65 (RVVLLK), 75-76 (FT), R81, K82, and Q104 each bind FMN. The substrate site is built by Y122, R126, and S130. FMN contacts are provided by residues 139–140 (QS) and W183. Residue 189 to 191 (RLH) participates in substrate binding. R193 contributes to the FMN binding site.

It belongs to the pyridoxamine 5'-phosphate oxidase family. In terms of assembly, homodimer. FMN serves as cofactor.

It catalyses the reaction pyridoxamine 5'-phosphate + O2 + H2O = pyridoxal 5'-phosphate + H2O2 + NH4(+). The catalysed reaction is pyridoxine 5'-phosphate + O2 = pyridoxal 5'-phosphate + H2O2. It participates in cofactor metabolism; pyridoxal 5'-phosphate salvage; pyridoxal 5'-phosphate from pyridoxamine 5'-phosphate: step 1/1. Its pathway is cofactor metabolism; pyridoxal 5'-phosphate salvage; pyridoxal 5'-phosphate from pyridoxine 5'-phosphate: step 1/1. Catalyzes the oxidation of either pyridoxine 5'-phosphate (PNP) or pyridoxamine 5'-phosphate (PMP) into pyridoxal 5'-phosphate (PLP). The chain is Pyridoxine/pyridoxamine 5'-phosphate oxidase from Actinobacillus succinogenes (strain ATCC 55618 / DSM 22257 / CCUG 43843 / 130Z).